Here is a 457-residue protein sequence, read N- to C-terminus: MDCDICHRSHDAKRLPFLCTVDARAALYDGRIENVMALIENEDLQKQISDLLDETNAPTKDRKDALQAQQRTAEDRTTQILAAADKLRNDIKAAKEEIQTRRAALSRRKSDIAAVSDGLIERRVKRQKSVERETGMHKYRWTKCADELARTRSFLCIEAAQLYGLKRIKEGSPSKYEYYLGGIPVVDLTAMNSSTPEMISTSLSHICQILILVSHYLSIRLPAAITLPHRDYPRPTIFNLSASYRPGDPVFPSQASVSSPSSTTDTESQRVSRPRPLFIDKPLSQLAKEDPATFSYFIEGVTLLAYNIAWACNTQGVSIGDKALFEDMSNMGRNLYNLLINHQSAGKDPDTLKNEADGQTSRFGQYSHGTTFYHLGGAEGTEFSKTFKLPSPMKLADKLKKKLLSEAPTPDWEVLDDDAWKVEEELADGSQVNKNLLMGDKSSPRRGTSGWMRVKNR.

Residues 31 to 109 (RIENVMALIE…TRRAALSRRK (79 aa)) are a coiled coil. 3 disordered regions span residues 54–73 (ETNA…QRTA), 252–274 (PSQA…VSRP), and 433–457 (NKNL…VKNR). Positions 253 to 266 (SQASVSSPSSTTDT) are enriched in low complexity.

Belongs to the ATG14 family. As to quaternary structure, component of the autophagy-specific VPS34 PI3-kinase complex I.

The protein resides in the preautophagosomal structure membrane. It localises to the vacuole membrane. Its function is as follows. Required for cytoplasm to vacuole transport (Cvt) and autophagy as a part of the autophagy-specific VPS34 PI3-kinase complex I. This complex is essential to recruit the ATG8-phosphatidylinositol conjugate and the ATG12-ATG5 conjugate to the pre-autophagosomal structure. ATG14 mediates the specific binding of the VPS34 PI3-kinase complex I to the preautophagosomal structure (PAS). Autophagy is required for proper vegetative growth, asexual/sexual reproduction, and full virulence. Autophagy is particularly involved in the biosynthesis of deoxynivalenol (DON), an important virulence determinant. This is Autophagy-related protein 14 from Gibberella zeae (strain ATCC MYA-4620 / CBS 123657 / FGSC 9075 / NRRL 31084 / PH-1) (Wheat head blight fungus).